The sequence spans 398 residues: Alpha-ketoglutarate-dependent dioxygenase bsc9 (398 aa).

Fe cation-binding residues include His167 and Asp169. Thr212 contacts 2-oxoglutarate. His365 contacts Fe cation. Arg377 provides a ligand contact to 2-oxoglutarate.

The protein belongs to the TfdA dioxygenase family. Fe(2+) serves as cofactor.

It functions in the pathway mycotoxin biosynthesis. Alpha-ketoglutarate dependent dioxygenase; part of the gene cluster that mediates the biosynthesis of the diterpene glucoside brassicicene C. In the first step of the brassicicene C biosynthesis, the bifunctional diterpene synthase bsc8 that possesses both prenyl transferase and terpene cyclase activity, converts isopentenyl diphosphate and dimethylallyl diphosphate into geranylgeranyl diphosphate (GGDP) that is further converted into fusicocca-2,10(14)-diene, the first precursor for brassicicene C. Fusicocca-2,10(14)-diene is then substrate of cytochrome P450 monooxygenase bsc1 for hydroxylation at the C-8 position. Oxidation at C-16 position to aldehyde is then catalyzed by the cytochrome P450 monooyxygenase bsc7, yielding fusicocca-2,10(14)-diene-8-beta,16-diol. Follows the isomerization of the double bond and reduction of aldehyde to alcohol catalyzed by the short-chain dehydrogenase/reductase bsc3 to yield the diol compound fusicocca-1,10(14)-diene-8 beta,16-diol. The next step is the oxidation at the C-3 position of fusicocca-2,10(14)-diene-8-beta,16-diol catalyzed by the alpha-ketoglutarate dependent dioxygenase bsc9, to produce a triol compound. Methylation of the hydroxy group at position 16 is performed by the methyltransferase bsc6. 16-O-methylation is followed by oxidation at the C-13 position to ketone and an alkyl shift of the methyl group leads to brassicicene C. Although the probable acetyltransferase bsc4 is included in the gene cluster, no acetylation reactions are necessary for brassicicene C biosynthesis. However, the fact that brassicicene E, which is a structurally related compound having an acetoxy group at position 12, was previously isolated from another strain of A.brassicicola suggests that the ATCC 96836 strain might also produce a small amount of brassicicene E. This is Alpha-ketoglutarate-dependent dioxygenase bsc9 from Alternaria brassicicola (Dark leaf spot agent).